The sequence spans 147 residues: UPF0306 protein YhbP (147 aa).

Belongs to the UPF0306 family.

The chain is UPF0306 protein YhbP from Salmonella paratyphi A (strain AKU_12601).